Here is a 430-residue protein sequence, read N- to C-terminus: Histidine--tRNA ligase (430 aa).

The protein belongs to the class-II aminoacyl-tRNA synthetase family. As to quaternary structure, homodimer.

The protein resides in the cytoplasm. It carries out the reaction tRNA(His) + L-histidine + ATP = L-histidyl-tRNA(His) + AMP + diphosphate + H(+). The protein is Histidine--tRNA ligase of Anaplasma marginale (strain Florida).